Here is a 431-residue protein sequence, read N- to C-terminus: 5-methylthioadenosine/S-adenosylhomocysteine deaminase (431 aa).

The Zn(2+) site is built by histidine 60 and histidine 62. Substrate-binding residues include glutamate 89 and histidine 182. Histidine 209 is a Zn(2+) binding site. Residues glutamate 212 and aspartate 297 each coordinate substrate. A Zn(2+)-binding site is contributed by aspartate 297.

This sequence belongs to the metallo-dependent hydrolases superfamily. MTA/SAH deaminase family. The cofactor is Zn(2+).

It carries out the reaction S-adenosyl-L-homocysteine + H2O + H(+) = S-inosyl-L-homocysteine + NH4(+). The catalysed reaction is S-methyl-5'-thioadenosine + H2O + H(+) = S-methyl-5'-thioinosine + NH4(+). In terms of biological role, catalyzes the deamination of 5-methylthioadenosine and S-adenosyl-L-homocysteine into 5-methylthioinosine and S-inosyl-L-homocysteine, respectively. Is also able to deaminate adenosine. This Natronomonas pharaonis (strain ATCC 35678 / DSM 2160 / CIP 103997 / JCM 8858 / NBRC 14720 / NCIMB 2260 / Gabara) (Halobacterium pharaonis) protein is 5-methylthioadenosine/S-adenosylhomocysteine deaminase.